The following is a 197-amino-acid chain: Beta-crystallin A2 (197 aa).

The interval 1-11 is N-terminal arm; it reads MSSAPAPGSAP. 2 consecutive Beta/gamma crystallin 'Greek key' domains span residues 12 to 52 and 53 to 99; these read VCLT…KVEN and GAWV…RPVL. The interval 100–105 is connecting peptide; it reads CANHSD. Beta/gamma crystallin 'Greek key' domains are found at residues 106 to 147 and 148 to 196; these read SRVT…KVSS and GAWV…RRVQ.

It belongs to the beta/gamma-crystallin family. In terms of assembly, homo/heterodimer, or complexes of higher-order. The structure of beta-crystallin oligomers seems to be stabilized through interactions between the N-terminal arms.

In terms of biological role, crystallins are the dominant structural components of the vertebrate eye lens. The polypeptide is Beta-crystallin A2 (Cryba2) (Mus musculus (Mouse)).